The primary structure comprises 304 residues: Putative F-box/LRR-repeat protein 21 (304 aa).

Residues Arg-43–Ile-90 enclose the F-box domain. LRR repeat units lie at residues Leu-132–Asn-159, Thr-173–Ser-198, Gly-218–Leu-241, and Ala-243–Lys-268.

This is Putative F-box/LRR-repeat protein 21 (FBL21) from Arabidopsis thaliana (Mouse-ear cress).